The primary structure comprises 279 residues: NADPH-dependent 7-cyano-7-deazaguanine reductase (279 aa).

Substrate is bound at residue 86-88 (IES). Residue 88–89 (SK) participates in NADPH binding. The active-site Thioimide intermediate is the Cys-187. Asp-194 functions as the Proton donor in the catalytic mechanism. Substrate is bound at residue 226–227 (HE). 255–256 (RG) lines the NADPH pocket.

The protein belongs to the GTP cyclohydrolase I family. QueF type 2 subfamily. Homodimer.

Its subcellular location is the cytoplasm. It carries out the reaction 7-aminomethyl-7-carbaguanine + 2 NADP(+) = 7-cyano-7-deazaguanine + 2 NADPH + 3 H(+). It functions in the pathway tRNA modification; tRNA-queuosine biosynthesis. Catalyzes the NADPH-dependent reduction of 7-cyano-7-deazaguanine (preQ0) to 7-aminomethyl-7-deazaguanine (preQ1). The polypeptide is NADPH-dependent 7-cyano-7-deazaguanine reductase (Actinobacillus pleuropneumoniae serotype 7 (strain AP76)).